We begin with the raw amino-acid sequence, 161 residues long: MMKIRIGNGYDIHRLVPERPLILGGIRLEHACGLLGHSDADVLTHAIMDALLGALSLGDIGHYFPPSDPQWAGADSQVLLAKVAALIAERGWRVGNIDAVVVAERPKLKPYLDPMRDRLATTLGIDRDQISIKATTNEKLGPVGREEGIAAYAVALLQSGM.

Residues Asp11 and His13 each coordinate a divalent metal cation. 4-CDP-2-C-methyl-D-erythritol 2-phosphate-binding positions include 11–13 (DIH) and 37–38 (HS). Residue His45 coordinates a divalent metal cation. Residues 59 to 61 (DIG), 135 to 138 (TTNE), and Arg145 contribute to the 4-CDP-2-C-methyl-D-erythritol 2-phosphate site.

It belongs to the IspF family. In terms of assembly, homotrimer. A divalent metal cation is required as a cofactor.

The enzyme catalyses 4-CDP-2-C-methyl-D-erythritol 2-phosphate = 2-C-methyl-D-erythritol 2,4-cyclic diphosphate + CMP. It functions in the pathway isoprenoid biosynthesis; isopentenyl diphosphate biosynthesis via DXP pathway; isopentenyl diphosphate from 1-deoxy-D-xylulose 5-phosphate: step 4/6. In terms of biological role, involved in the biosynthesis of isopentenyl diphosphate (IPP) and dimethylallyl diphosphate (DMAPP), two major building blocks of isoprenoid compounds. Catalyzes the conversion of 4-diphosphocytidyl-2-C-methyl-D-erythritol 2-phosphate (CDP-ME2P) to 2-C-methyl-D-erythritol 2,4-cyclodiphosphate (ME-CPP) with a corresponding release of cytidine 5-monophosphate (CMP). The sequence is that of 2-C-methyl-D-erythritol 2,4-cyclodiphosphate synthase from Thermosynechococcus vestitus (strain NIES-2133 / IAM M-273 / BP-1).